We begin with the raw amino-acid sequence, 457 residues long: MALWGGRFTQAADKRFKDFNDSLRFDYRLAEQDIQGSIGWSKALVKVNVLTIEEQHQLEQALNELLVEVRSNPQAILQDDAEDIHSWVESKLIDKVGNLGKKLHTGRSRNDQVAVDIKLWCKQRVVELQESVRNLQRHLVQTAENTQQAVMPGYTHLQRAQPITFAHWCMAYVEMFDRDYSRLTDAYNRMNTCPLGSGALAGTAYAVDRDSLAHDLGFAFATRNSLDSVSDRDHIVELLSIASLSMAHLSRFAEDMIIFNSGEANFVELSDRVTSGSSLMPQKKNPDACELIRGKTGRVIGSLTSMLITLKGLPLAYNKDMQEDKEGIFDALDTWQNCVDMATFVLDELKVNVERTREAALKGYSNATELADYLVSKGVPFRDSHHIVGETVVYAIEKGKGLEDLTIPEFRQFSEVVGDDVYEILSLQSCLDKRCAKGGVSPLRVAEAIAEAKTRFA.

Belongs to the lyase 1 family. Argininosuccinate lyase subfamily.

Its subcellular location is the cytoplasm. It carries out the reaction 2-(N(omega)-L-arginino)succinate = fumarate + L-arginine. The protein operates within amino-acid biosynthesis; L-arginine biosynthesis; L-arginine from L-ornithine and carbamoyl phosphate: step 3/3. The protein is Argininosuccinate lyase of Haemophilus influenzae (strain PittEE).